The primary structure comprises 260 residues: MLILVTNDDGINAPGIKALSRSLARVGRVAVVAPEKERSAIGHGITMHKPLRATEVTWEGPVEMALAVNGTPADCVKLALDALLDEEPSLVVSGINMGANLGTDVLYSGTVSGALEGCINGRPSLAVSLAGEGGVDFSFAADFTSRLAGVIIKRGLPAGTLLNLNIPCLPPGEIKGLAITRLGRRRYCNTITRRLDPRGRAYYWLAGEVEDLDQEPDTDIGALGQGRISITPLHLDLTNYSYQQELAAYLSFLWPGQGNR.

4 residues coordinate a divalent metal cation: aspartate 8, aspartate 9, serine 39, and asparagine 96.

This sequence belongs to the SurE nucleotidase family. It depends on a divalent metal cation as a cofactor.

The protein resides in the cytoplasm. The catalysed reaction is a ribonucleoside 5'-phosphate + H2O = a ribonucleoside + phosphate. Nucleotidase that shows phosphatase activity on nucleoside 5'-monophosphates. This Moorella thermoacetica (strain ATCC 39073 / JCM 9320) protein is 5'-nucleotidase SurE.